Reading from the N-terminus, the 258-residue chain is Axonemal dynein light intermediate polypeptide 1 (258 aa).

2 disordered regions span residues 1–60 (MIPP…CVPD) and 202–231 (DLER…EEKK). Positions 176–255 (MRKALQAEQG…LKAQLEGIIA (80 aa)) form a coiled coil.

It belongs to the inner dynein arm light chain family. As to quaternary structure, interacts with CFAP45. Interacts with DYNC1H1.

It localises to the cell projection. Its subcellular location is the cilium. The protein localises to the flagellum. The protein resides in the dynein axonemal particle. It is found in the cytoplasm. Functionally, involved in sperm flagellum assembly. The polypeptide is Axonemal dynein light intermediate polypeptide 1 (Rattus norvegicus (Rat)).